The following is a 195-amino-acid chain: Protein lin-28 homolog A (195 aa).

The region spanning 33 to 106 is the CSD domain; it reads QGSGVCKWFN…GLESTQVTGP (74 aa). Positions 98-127 are disordered; that stretch reads LESTQVTGPGGAPCIGSERRPKVKGQQKRR. Residues 107–130 are flexible linker; it reads GGAPCIGSERRPKVKGQQKRRQRG. A compositionally biased stretch (basic residues) spans 118–127; sequence PKVKGQQKRR. CCHC-type zinc fingers lie at residues 131-148 and 153-170; these read DRCYNCGGLDHHAKECKL and KKCHFCQNPNHMVAQCPE. The Zn(2+) site is built by C133, C136, H141, C146, C155, C158, H163, and C168.

This sequence belongs to the lin-28 family. Monomer.

Its subcellular location is the cytoplasm. It is found in the rough endoplasmic reticulum. The protein resides in the P-body. It localises to the stress granule. The protein localises to the nucleus. Its subcellular location is the nucleolus. Its function is as follows. RNA-binding protein that inhibits processing of pre-let-7 miRNAs and regulates translation of mRNAs that control developmental timing, pluripotency and metabolism. Seems to recognize a common structural G-quartet (G4) feature in its miRNA and mRNA targets. 'Translational enhancer' that drives specific mRNAs to polysomes and increases the efficiency of protein synthesis. Its association with the translational machinery and target mRNAs results in an increased number of initiation events per molecule of mRNA and, indirectly, in mRNA stabilization. Suppressor of microRNA (miRNA) biogenesis, including that of let-7. Binds specific target miRNA precursors (pre-miRNAs), recognizing an 5'-GGAG-3' motif found in their terminal loop, and recruits uridylyltransferase. This results in the terminal uridylation of target pre-miRNAs. Uridylated pre-miRNAs fail to be processed by Dicer and undergo degradation. Localized to the periendoplasmic reticulum area, binds to a large number of spliced mRNAs and inhibits the translation of mRNAs destined for the ER, reducing the synthesis of transmembrane proteins, ER or Golgi lumen proteins, and secretory proteins. Binds to and enhances the translation of mRNAs for several metabolic enzymes, increasing glycolysis and oxidative phosphorylation. Which, with the let-7 repression may enhance tissue repair in adult tissue. The sequence is that of Protein lin-28 homolog A (lin28a) from Xenopus laevis (African clawed frog).